The chain runs to 166 residues: Cyclin-dependent kinase 4 inhibitor D (166 aa).

An N-acetylmethionine modification is found at Met1. 4 ANK repeats span residues 41 to 69 (FGKTALQVMMFGSPTIALELLKQGASPNV), 73 to 102 (SGTTPAHDAARTGFLDTLKVLVEHGADVNA), 106 to 135 (TGALPIHLAVREGHTSVVSFLATESDLHHR), and 138 to 166 (TGLTPLELARGRGAQELMDILQRHTVAPL).

It belongs to the CDKN2 cyclin-dependent kinase inhibitor family. As to quaternary structure, interacts with CDK6.

Its subcellular location is the nucleus. The protein localises to the cytoplasm. In terms of biological role, interacts strongly with CDK4 and CDK6 and inhibits them. This is Cyclin-dependent kinase 4 inhibitor D (CDKN2D) from Bos taurus (Bovine).